Consider the following 155-residue polypeptide: Histone H2B.4 (155 aa).

The span at 1–28 (MAPKTKEEKPASEAVEPKAEAKPKAEKA) shows a compositional bias: basic and acidic residues. Residues 1–62 (MAPKTKEEKP…GDKKKKKAKV (62 aa)) are disordered. The segment covering 29 to 40 (PKKKEKKAPAKK) has biased composition (basic residues). Residue lysine 151 forms a Glycyl lysine isopeptide (Lys-Gly) (interchain with G-Cter in ubiquitin) linkage.

This sequence belongs to the histone H2B family. In terms of assembly, the nucleosome is a histone octamer containing two molecules each of H2A, H2B, H3 and H4 assembled in one H3-H4 heterotetramer and two H2A-H2B heterodimers. The octamer wraps approximately 147 bp of DNA. In terms of processing, monoubiquitinated to form H2BK143ub1; may give a specific tag for epigenetic transcriptional activation.

Its subcellular location is the nucleus. The protein localises to the chromosome. Its function is as follows. Core component of nucleosome. Nucleosomes wrap and compact DNA into chromatin, limiting DNA accessibility to the cellular machineries which require DNA as a template. Histones thereby play a central role in transcription regulation, DNA repair, DNA replication and chromosomal stability. DNA accessibility is regulated via a complex set of post-translational modifications of histones, also called histone code, and nucleosome remodeling. The polypeptide is Histone H2B.4 (Volvox carteri (Green alga)).